The chain runs to 362 residues: Holliday junction branch migration complex subunit RuvB (362 aa).

The tract at residues Met1 to Tyr183 is large ATPase domain (RuvB-L). ATP is bound by residues Leu22, Arg23, Gly64, Lys67, Thr68, Thr69, Glu130–Phe132, Arg173, Tyr183, and Arg220. Thr68 provides a ligand contact to Mg(2+). The interval Ser184–Glu254 is small ATPAse domain (RuvB-S). The segment at Lys257–Gln362 is head domain (RuvB-H). Arg312 and Arg317 together coordinate DNA.

It belongs to the RuvB family. In terms of assembly, homohexamer. Forms an RuvA(8)-RuvB(12)-Holliday junction (HJ) complex. HJ DNA is sandwiched between 2 RuvA tetramers; dsDNA enters through RuvA and exits via RuvB. An RuvB hexamer assembles on each DNA strand where it exits the tetramer. Each RuvB hexamer is contacted by two RuvA subunits (via domain III) on 2 adjacent RuvB subunits; this complex drives branch migration. In the full resolvosome a probable DNA-RuvA(4)-RuvB(12)-RuvC(2) complex forms which resolves the HJ.

It localises to the cytoplasm. The catalysed reaction is ATP + H2O = ADP + phosphate + H(+). The RuvA-RuvB-RuvC complex processes Holliday junction (HJ) DNA during genetic recombination and DNA repair, while the RuvA-RuvB complex plays an important role in the rescue of blocked DNA replication forks via replication fork reversal (RFR). RuvA specifically binds to HJ cruciform DNA, conferring on it an open structure. The RuvB hexamer acts as an ATP-dependent pump, pulling dsDNA into and through the RuvAB complex. RuvB forms 2 homohexamers on either side of HJ DNA bound by 1 or 2 RuvA tetramers; 4 subunits per hexamer contact DNA at a time. Coordinated motions by a converter formed by DNA-disengaged RuvB subunits stimulates ATP hydrolysis and nucleotide exchange. Immobilization of the converter enables RuvB to convert the ATP-contained energy into a lever motion, pulling 2 nucleotides of DNA out of the RuvA tetramer per ATP hydrolyzed, thus driving DNA branch migration. The RuvB motors rotate together with the DNA substrate, which together with the progressing nucleotide cycle form the mechanistic basis for DNA recombination by continuous HJ branch migration. Branch migration allows RuvC to scan DNA until it finds its consensus sequence, where it cleaves and resolves cruciform DNA. The polypeptide is Holliday junction branch migration complex subunit RuvB (Arthrobacter sp. (strain FB24)).